The primary structure comprises 176 residues: MANIGIFFGTDTGKTRKIAKMIHKQLGELADAPVNINRTTLDDFMAYPVLLLGTPTLGDGQLPGLEAGCESESWSEFISGLDDASLKGKTVALFGLGDQRGYPDNFVSGMRPLFDALSARGAQMIGSWPNEGYEFSASSALEGDRFVGLVLDQDNQFDQTEARLASWLEEIKRTVL.

Residues 4–172 (IGIFFGTDTG…RLASWLEEIK (169 aa)) form the Flavodoxin-like domain.

The protein belongs to the flavodoxin family. It depends on FMN as a cofactor.

Its function is as follows. Low-potential electron donor to a number of redox enzymes. NifF is the electron donor to nitrogenase. The protein is Flavodoxin (nifF) of Klebsiella pneumoniae.